The primary structure comprises 1578 residues: Mediator of RNA polymerase II transcription subunit 14 (1578 aa).

The LXXLL motif 1 motif lies at 49-53 (LAELL). The disordered stretch occupies residues 561–582 (SQSVTAGGTSQSSAPSAATTES). Positions 565–580 (TAGGTSQSSAPSAATT) are enriched in low complexity. Positions 739-743 (LKRLL) match the LXXLL motif 2 motif. 2 disordered regions span residues 1009-1173 (RRRS…PDHK) and 1510-1578 (APGG…GGPN). A compositionally biased stretch (polar residues) spans 1084 to 1093 (SQSHPNFNMT). Pro residues-rich tracts occupy residues 1095-1104 (PPAPHMPHPS) and 1157-1167 (PGMPRPSPRPG). 2 stretches are compositionally biased toward gly residues: residues 1510 to 1521 (APGGPGGPGPMG) and 1547 to 1578 (MGGG…GGPN).

It belongs to the Mediator complex subunit 14 family. As to quaternary structure, component of the Mediator complex.

The protein resides in the nucleus. Functionally, component of the Mediator complex, a coactivator involved in the regulated transcription of nearly all RNA polymerase II-dependent genes. Mediator functions as a bridge to convey information from gene-specific regulatory proteins to the basal RNA polymerase II transcription machinery. Mediator is recruited to promoters by direct interactions with regulatory proteins and serves as a scaffold for the assembly of a functional preinitiation complex with RNA polymerase II and the general transcription factors. This Aedes aegypti (Yellowfever mosquito) protein is Mediator of RNA polymerase II transcription subunit 14 (MED14).